The chain runs to 625 residues: pH-response transcription factor pacC/RIM101 (625 aa).

Positions 1–34 (MSSQDQQQQQQPAQTQTSTSSSSNNENATTATSS) are enriched in low complexity. Residues 1–35 (MSSQDQQQQQQPAQTQTSTSSSSNNENATTATSSI) are disordered. 3 C2H2-type zinc fingers span residues 45–70 (LLCQ…CEKH), 81–105 (LTCG…IRVH), and 111–133 (HKCE…VKTH). Over residues 391–416 (APMTATHSSHSVSSGTPALTPPSSSV) the composition is skewed to polar residues. Positions 391-440 (APMTATHSSHSVSSGTPALTPPSSSVSYTSGNSPMSSSGMSPISRHSSTS) are disordered. The span at 417-438 (SYTSGNSPMSSSGMSPISRHSS) shows a compositional bias: low complexity. Residues 444–447 (YPNL) carry the YPX[LI] motif 1 motif. 2 disordered regions span residues 455 to 543 (SPHH…SPSV) and 584 to 625 (VKDE…DDDE). 2 stretches are compositionally biased toward polar residues: residues 461–472 (TAPTSTLGTNFD) and 490–514 (GLNS…SPKE). The YPX[LI] motif 2 signature appears at 615–618 (YPVL).

It belongs to the pacC/RIM101 family. In terms of processing, activated by C-terminal proteolytic cleavage by signaling protease (probably palB/RIM13) at neutral to alkaline ambient pH.

It localises to the cytoplasm. It is found in the nucleus. Functionally, transcription factor that mediates regulation of both acid- and alkaline-expressed genes in response to ambient pH. At alkaline ambient pH, activates transcription of alkaline-expressed genes (including pac1 itself) and represses transcription of acid-expressed genes. The polypeptide is pH-response transcription factor pacC/RIM101 (pac1) (Sclerotinia sclerotiorum (White mold)).